We begin with the raw amino-acid sequence, 344 residues long: Trace amine-associated receptor 8b (344 aa).

Over 1–33 (MTSNFSQATLQLCYENVNASCIKTPYSPGLRVL) the chain is Extracellular. Residues Asn4 and Asn18 are each glycosylated (N-linked (GlcNAc...) asparagine). 2 disulfides stabilise this stretch: Cys21-Cys185 and Cys104-Cys189. Residues 34–54 (LYMVFGFGAVLAVCGNLLVVI) traverse the membrane as a helical segment. Residues 55–67 (SVLHFKQLHSPAN) lie on the Cytoplasmic side of the membrane. Residues 68 to 88 (FLIASLASADFLVGISVMPFS) traverse the membrane as a helical segment. The Extracellular portion of the chain corresponds to 89 to 102 (MVRSIESCWYFGDT). A helical transmembrane segment spans residues 103-127 (FCSLHSCCDAAFCYSSLFHLCFISV). Topologically, residues 128–146 (DRYIAVTEPLVYPTKFTMS) are cytoplasmic. The helical transmembrane segment at 147–167 (VSGICISISWILPLVYSSAVF) threads the bilayer. At 168–196 (YTGISATGIENLVSALNCVGGCQVAINQD) the chain is on the extracellular side. The helical transmembrane segment at 197–217 (WVLISFLLFFIPTLVMIILYS) threads the bilayer. At 218 to 256 (KIFLVAKQQAVKIETSISGSKGESSLESHKARVAKRERK) the chain is on the cytoplasmic side. The helical transmembrane segment at 257-277 (AAKTLGVTVMAFMVSWLPYTI) threads the bilayer. At 278-295 (DTLIDAFMGFITPAYVYE) the chain is on the extracellular side. A helical membrane pass occupies residues 296–319 (ICGWIAYYNSAMNPLIYAFFYPWF). At 320–344 (RKAIKLILSGKILKGHSSTTSLFSE) the chain is on the cytoplasmic side.

The protein belongs to the G-protein coupled receptor 1 family.

It is found in the cell membrane. In terms of biological role, olfactory receptor activated by trace amines. Trace amine compounds are enriched in animal body fluids and act on trace amine-associated receptors (TAARs) to elicit both intraspecific and interspecific innate behaviors. Ligand-binding causes a conformation change that triggers signaling via G(s)-class of G alpha proteins (GNAL or GNAS). This is Trace amine-associated receptor 8b from Rattus norvegicus (Rat).